A 230-amino-acid polypeptide reads, in one-letter code: Putative transcription factor bHLH107 (230 aa).

The region spanning 44 to 93 is the bHLH domain; that stretch reads ASLRNHKEAERKRRARINSHLNKLRKLLSCNSKTDKSTLLAKVVQRVKEL.

In terms of assembly, homodimer.

The protein localises to the nucleus. This chain is Putative transcription factor bHLH107 (BHLH107), found in Arabidopsis thaliana (Mouse-ear cress).